The sequence spans 540 residues: CTP synthase (540 aa).

The interval 1–265 (MVRFIFITGG…DNKVLKFFNL (265 aa)) is amidoligase domain. Residue serine 13 coordinates CTP. Residue serine 13 coordinates UTP. Residues 14–19 (SLGKGL) and aspartate 71 each bind ATP. Mg(2+)-binding residues include aspartate 71 and glutamate 139. CTP contacts are provided by residues 146-148 (DIE), 186-191 (KTKPTQ), and lysine 222. Residues 186-191 (KTKPTQ) and lysine 222 contribute to the UTP site. Residues 290 to 539 (RIAIIAKYHK…VEAAIKYNKN (250 aa)) enclose the Glutamine amidotransferase type-1 domain. Residue glycine 352 coordinates L-glutamine. Catalysis depends on cysteine 379, which acts as the Nucleophile; for glutamine hydrolysis. Residues 380-383 (LGMQ), glutamate 403, and arginine 467 each bind L-glutamine. Residues histidine 512 and glutamate 514 contribute to the active site.

Belongs to the CTP synthase family. In terms of assembly, homotetramer.

It catalyses the reaction UTP + L-glutamine + ATP + H2O = CTP + L-glutamate + ADP + phosphate + 2 H(+). The enzyme catalyses L-glutamine + H2O = L-glutamate + NH4(+). It carries out the reaction UTP + NH4(+) + ATP = CTP + ADP + phosphate + 2 H(+). Its pathway is pyrimidine metabolism; CTP biosynthesis via de novo pathway; CTP from UDP: step 2/2. With respect to regulation, allosterically activated by GTP, when glutamine is the substrate; GTP has no effect on the reaction when ammonia is the substrate. The allosteric effector GTP functions by stabilizing the protein conformation that binds the tetrahedral intermediate(s) formed during glutamine hydrolysis. Inhibited by the product CTP, via allosteric rather than competitive inhibition. In terms of biological role, catalyzes the ATP-dependent amination of UTP to CTP with either L-glutamine or ammonia as the source of nitrogen. Regulates intracellular CTP levels through interactions with the four ribonucleotide triphosphates. In Rickettsia bellii (strain RML369-C), this protein is CTP synthase.